The chain runs to 338 residues: Adenylosuccinate synthetase (338 aa).

GTP is bound by residues 12–18 (GDEGKGK) and 42–44 (GHT). Residue Asp13 is the Proton acceptor of the active site. Positions 13 and 42 each coordinate Mg(2+). IMP is bound by residues 13-16 (DEGK), 40-43 (NAGH), Thr127, Arg141, Gln179, Thr194, and Arg256. Catalysis depends on His43, which acts as the Proton donor. 252–258 (TVTGRRR) lines the substrate pocket. GTP-binding positions include Arg258, 284–286 (CLD), and 324–326 (STG).

This sequence belongs to the adenylosuccinate synthetase family. In terms of assembly, homodimer. Mg(2+) serves as cofactor.

The protein resides in the cytoplasm. It carries out the reaction IMP + L-aspartate + GTP = N(6)-(1,2-dicarboxyethyl)-AMP + GDP + phosphate + 2 H(+). It functions in the pathway purine metabolism; AMP biosynthesis via de novo pathway; AMP from IMP: step 1/2. Plays an important role in the de novo pathway of purine nucleotide biosynthesis. Catalyzes the first committed step in the biosynthesis of AMP from IMP. This is Adenylosuccinate synthetase from Methanococcus vannielii (strain ATCC 35089 / DSM 1224 / JCM 13029 / OCM 148 / SB).